Reading from the N-terminus, the 266-residue chain is Basic endochitinase C (266 aa).

Positions 1–23 (MRSLAVVVAVVATVAMAIGTAHG) are cleaved as a signal peptide. Disulfide bonds link C46/C108, C120/C128, and C246/C259. E90 serves as the catalytic Proton donor.

This sequence belongs to the glycosyl hydrolase 19 family. Chitinase class II subfamily. In terms of tissue distribution, localized to the starchy endoderm of the seed May localize to other parts of the seed including the aleurone cells (at protein level).

It carries out the reaction Random endo-hydrolysis of N-acetyl-beta-D-glucosaminide (1-&gt;4)-beta-linkages in chitin and chitodextrins.. In terms of biological role, defense against chitin-containing fungal pathogens. Binds the hyphal tips of fungi and degrades nascent chitin. This Secale cereale (Rye) protein is Basic endochitinase C.